A 313-amino-acid chain; its full sequence is Aspartate carbamoyltransferase catalytic subunit (313 aa).

Residues Arg-58 and Thr-59 each contribute to the carbamoyl phosphate site. Lys-86 provides a ligand contact to L-aspartate. 3 residues coordinate carbamoyl phosphate: Arg-108, His-136, and Gln-139. The L-aspartate site is built by Arg-169 and Arg-223. Gly-265 and Pro-266 together coordinate carbamoyl phosphate.

The protein belongs to the aspartate/ornithine carbamoyltransferase superfamily. ATCase family. As to quaternary structure, heterododecamer (2C3:3R2) of six catalytic PyrB chains organized as two trimers (C3), and six regulatory PyrI chains organized as three dimers (R2).

The enzyme catalyses carbamoyl phosphate + L-aspartate = N-carbamoyl-L-aspartate + phosphate + H(+). It functions in the pathway pyrimidine metabolism; UMP biosynthesis via de novo pathway; (S)-dihydroorotate from bicarbonate: step 2/3. Catalyzes the condensation of carbamoyl phosphate and aspartate to form carbamoyl aspartate and inorganic phosphate, the committed step in the de novo pyrimidine nucleotide biosynthesis pathway. The sequence is that of Aspartate carbamoyltransferase catalytic subunit from Anaeromyxobacter dehalogenans (strain 2CP-C).